The chain runs to 551 residues: MSTASTPPINLFRRKKEHKRGITYTMLLCGPAGTGKTAFANNLLETKIFPHKYQYGKSNASISSNPEVKVIAPTKVVSFNSKNGIPSYVSEFDPMRANLEPGITITSTSLELGGNKDQGKPEMNEDDTVFFNLIMTHGIGENLDDSLCSEEVMSYLEQQFDIVLAEETRIKRNPRFEDTRVHVALYFIEPTGHGLREVDVELMKSISKYTNVLPIITRADSFTKEELTQFRKNIMFDVERYNVPIYKFEVDPEDDDLESMEENQALASLQPFAIITSDTRDSEGRYVREYPWGIISIDDDKISDLKVLKNVLFGSHLQEFKDTTQNLLYENYRSEKLSSVANAEEIGPNSTKRQSNAPSLSNFASLISTGQFNSSQTLANNLRADTPRNQVSGNFKENEYEDNGEHDSAENEQEMSPVRQLGREIKQENENLIRSIKTESSPKFLNSPDLPERTKLRNISETVPYVLRHERILARQQKLEELEAQSAKELQKRIQELERKAHELKLREKLINQNKLNGSSSSINSLQQSTRSQIKKNDTYTDLASIASGRD.

Ser-2 bears the N-acetylserine mark. Positions 20–339 constitute a Septin-type G domain; that stretch reads RGITYTMLLC…ENYRSEKLSS (320 aa). Residues 30-37 are G1 motif; it reads GPAGTGKT. GTP contacts are provided by residues 30-37, Gly-138, 218-226, and Arg-288; these read GPAGTGKT and RADSFTKEE. Positions 135-138 are G3 motif; that stretch reads MTHG. The segment at 217–220 is G4 motif; sequence TRAD. A disordered region spans residues 381–417; sequence NLRADTPRNQVSGNFKENEYEDNGEHDSAENEQEMSP. At Tyr-400 the chain carries Phosphotyrosine. Residues Ser-408 and Ser-416 each carry the phosphoserine modification. The stretch at 418-518 forms a coiled coil; the sequence is VRQLGREIKQ…KLINQNKLNG (101 aa). Residues Lys-426 and Lys-437 each participate in a glycyl lysine isopeptide (Lys-Gly) (interchain with G-Cter in SUMO) cross-link. Ser-447, Ser-460, Ser-519, Ser-520, Ser-522, and Ser-525 each carry phosphoserine. Positions 515–551 are disordered; that stretch reads KLNGSSSSINSLQQSTRSQIKKNDTYTDLASIASGRD. Positions 519-532 are enriched in low complexity; sequence SSSSINSLQQSTRS. A Phosphothreonine modification is found at Thr-539. Phosphoserine occurs at positions 545 and 548.

Belongs to the TRAFAC class TrmE-Era-EngA-EngB-Septin-like GTPase superfamily. Septin GTPase family. Component of the septin complex which consists of CDC3, CDC10, CDC11, CDC12 and probably SHS1 and rearranges to a cortical collar of highly ordered filaments at the mother-bud-neck. A complex formed by CDC3, CDC10, CDC11 and CDC12 is capable of forming long filaments in vitro and the components seem to be present in a 2:2:2:2 arrangement in vivo. The filaments are proposed to be formed by the end-to-end polymerization of CDC3-CDC12-CDC11 complexes with CDC10 serving as a bridge to bundle the polymers into paired filaments. Component of the GIN4 complex composed of at least BNI5, CDC3, CDC10, CDC11, CDC12, GIN4, NAP1 and SHS1. Self-associates. Interacts with CDC11 and SPA2. Phosphorylated by GIN4 and CLA4. Phosphorylation state is essential for septin ring dynamics during telophase. Post-translationally, sumoylated during mitosis on the mother cell side of the bud neck. Sumoylation probably plays a central role in regulating septin ring disassembly during the cell cycle.

Its subcellular location is the membrane. It is found in the bud neck. Septins are GTPases involved in cytokinesis that assemble early in the cell cycle as a patch at the incipient bud site and form a ring approximately 15 minutes before bud emergence, which transforms into an hour-glass shaped collar of cortical filaments that spans both sides of the mother-bud neck. This collar persists until just before cytokinesis, when it splits into two rings that occupy opposite sides of the neck. The septins at the bud neck serve as a structural scaffold that recruits different components involved in diverse processes at specific stages during the cell cycle. Many proteins bind asymmetrically to the septin collar. The septin assembly is regulated by protein kinases GIN4 and/or CLA4. May act by recruiting MYO1 and HOF1, a protein involved in septation, to the site of cleavage. Septins are also involved in cell morphogenesis, bud site selection, chitin deposition, cell cycle regulation, cell compartmentalization and spore wall formation. CDCd11 with SHS1 11 are involved in the recruitment of BNI5 and thereby ensure efficient localization at the bud neck of MYO1, the type II myosin of the actomyosin contractile ring. This chain is Seventh homolog of septin 1, found in Saccharomyces cerevisiae (strain ATCC 204508 / S288c) (Baker's yeast).